The following is a 28-amino-acid chain: leu operon leader peptide (28 aa).

Involved in control of the biosynthesis of leucine. The polypeptide is leu operon leader peptide (leuL) (Salmonella typhimurium (strain LT2 / SGSC1412 / ATCC 700720)).